Reading from the N-terminus, the 353-residue chain is Uroporphyrinogen decarboxylase (353 aa).

Substrate is bound by residues 27–31 (RQAGR), Phe46, Asp76, Tyr152, Ser207, and His321.

This sequence belongs to the uroporphyrinogen decarboxylase family. Homodimer.

Its subcellular location is the cytoplasm. It catalyses the reaction uroporphyrinogen III + 4 H(+) = coproporphyrinogen III + 4 CO2. It participates in porphyrin-containing compound metabolism; protoporphyrin-IX biosynthesis; coproporphyrinogen-III from 5-aminolevulinate: step 4/4. In terms of biological role, catalyzes the decarboxylation of four acetate groups of uroporphyrinogen-III to yield coproporphyrinogen-III. The sequence is that of Uroporphyrinogen decarboxylase from Listeria monocytogenes serotype 4b (strain F2365).